The following is a 407-amino-acid chain: Phosphopentomutase (407 aa).

Residues aspartate 11, aspartate 305, histidine 310, aspartate 346, histidine 347, and histidine 358 each contribute to the Mn(2+) site.

The protein belongs to the phosphopentomutase family. The cofactor is Mn(2+).

It localises to the cytoplasm. It catalyses the reaction 2-deoxy-alpha-D-ribose 1-phosphate = 2-deoxy-D-ribose 5-phosphate. The enzyme catalyses alpha-D-ribose 1-phosphate = D-ribose 5-phosphate. It functions in the pathway carbohydrate degradation; 2-deoxy-D-ribose 1-phosphate degradation; D-glyceraldehyde 3-phosphate and acetaldehyde from 2-deoxy-alpha-D-ribose 1-phosphate: step 1/2. Functionally, isomerase that catalyzes the conversion of deoxy-ribose 1-phosphate (dRib-1-P) and ribose 1-phosphate (Rib-1-P) to deoxy-ribose 5-phosphate (dRib-5-P) and ribose 5-phosphate (Rib-5-P), respectively. The polypeptide is Phosphopentomutase (Legionella pneumophila (strain Lens)).